Consider the following 38-residue polypeptide: Alpha-2-macroglobulin homolog (38 aa).

The isoglutamyl cysteine thioester (Cys-Gln) cross-link spans 27–30 (CGEQ).

It belongs to the protease inhibitor I39 (alpha-2-macroglobulin) family. In terms of assembly, homodimer; disulfide-linked. Hemolymph.

It localises to the secreted. In terms of biological role, is able to inhibit all four classes of proteinases by a unique 'trapping' mechanism. This protein has a peptide stretch, called the 'bait region' which contains specific cleavage sites for different proteinases. When a proteinase cleaves the bait region, a conformational change is induced in the protein which traps the proteinase. The entrapped enzyme remains active against low molecular weight substrates (activity against high molecular weight substrates is greatly reduced). Following cleavage in the bait region a thioester bond is hydrolyzed and mediates the covalent binding of the protein to the proteinase. The sequence is that of Alpha-2-macroglobulin homolog from Homarus americanus (American lobster).